The following is an 843-amino-acid chain: Protein P (843 aa).

Residues Met-1–Gln-177 are terminal protein domain (TP). The spacer stretch occupies residues Glu-178–Leu-346. A polymerase/reverse transcriptase domain (RT) region spans residues Glu-347–Gln-690. The 244-residue stretch at Glu-357–Ile-600 folds into the Reverse transcriptase domain. Mg(2+)-binding residues include Asp-429, Asp-551, and Asp-552.

The protein belongs to the hepadnaviridae P protein family.

It catalyses the reaction DNA(n) + a 2'-deoxyribonucleoside 5'-triphosphate = DNA(n+1) + diphosphate. The catalysed reaction is Endonucleolytic cleavage to 5'-phosphomonoester.. With respect to regulation, activated by host HSP70 and HSP40 in vitro to be able to bind the epsilon loop of the pgRNA. Because deletion of the RNase H region renders the protein partly chaperone-independent, the chaperones may be needed indirectly to relieve occlusion of the RNA-binding site by this domain. Inhibited by several reverse-transcriptase inhibitors: Lamivudine, Adefovir and Entecavir. Its function is as follows. Multifunctional enzyme that converts the viral RNA genome into dsDNA in viral cytoplasmic capsids. This enzyme displays a DNA polymerase activity that can copy either DNA or RNA templates, and a ribonuclease H (RNase H) activity that cleaves the RNA strand of RNA-DNA heteroduplexes in a partially processive 3'- to 5'-endonucleasic mode. Neo-synthesized pregenomic RNA (pgRNA) are encapsidated together with the P protein, and reverse-transcribed inside the nucleocapsid. Initiation of reverse-transcription occurs first by binding the epsilon loop on the pgRNA genome, and is initiated by protein priming, thereby the 5'-end of (-)DNA is covalently linked to P protein. Partial (+)DNA is synthesized from the (-)DNA template and generates the relaxed circular DNA (RC-DNA) genome. After budding and infection, the RC-DNA migrates in the nucleus, and is converted into a plasmid-like covalently closed circular DNA (cccDNA). The activity of P protein does not seem to be necessary for cccDNA generation, and is presumably released from (+)DNA by host nuclear DNA repair machinery. This Hepatitis B virus genotype C subtype adr (isolate Japan/Nishioka/1983) (HBV-C) protein is Protein P.